The sequence spans 498 residues: Angiopoietin-1 (498 aa).

A signal peptide spans 1-19 (MTVFLSFAFFAAILTHIGC). Residues 81-119 (QKLQHLEHVMENYTQWLQKLENYIVENMKSEMAQIQQNA) are a coiled coil. 5 N-linked (GlcNAc...) asparagine glycosylation sites follow: Asn92, Asn122, Asn154, Asn243, and Asn295. A coiled-coil region spans residues 153–261 (LNQTSRLEIQ…LELMDTVHNL (109 aa)). The Fibrinogen C-terminal domain maps to 277–497 (REEEKPFRDC…STTMMIRPLD (221 aa)). 2 cysteine pairs are disulfide-bonded: Cys286–Cys315 and Cys439–Cys452.

In terms of assembly, homooligomer. Interacts with TEK/TIE2. Interacts with SVEP1/polydom. Interacts with THBD; this interaction significantly inhibits the generation of activated PC and TAFIa/CPB2 by the thrombin/thrombomodulin complex.

The protein localises to the secreted. Binds and activates TEK/TIE2 receptor by inducing its dimerization and tyrosine phosphorylation. Plays an important role in the regulation of angiogenesis, endothelial cell survival, proliferation, migration, adhesion and cell spreading, reorganization of the actin cytoskeleton, but also maintenance of vascular quiescence. Required for normal angiogenesis and heart development during embryogenesis. After birth, activates or inhibits angiogenesis, depending on the context. Inhibits angiogenesis and promotes vascular stability in quiescent vessels, where endothelial cells have tight contacts. In quiescent vessels, ANGPT1 oligomers recruit TEK to cell-cell contacts, forming complexes with TEK molecules from adjoining cells, and this leads to preferential activation of phosphatidylinositol 3-kinase and the AKT1 signaling cascades. In migrating endothelial cells that lack cell-cell adhesions, ANGT1 recruits TEK to contacts with the extracellular matrix, leading to the formation of focal adhesion complexes, activation of PTK2/FAK and of the downstream kinases MAPK1/ERK2 and MAPK3/ERK1, and ultimately to the stimulation of sprouting angiogenesis. Mediates blood vessel maturation/stability. Implicated in endothelial developmental processes later and distinct from that of VEGF. Appears to play a crucial role in mediating reciprocal interactions between the endothelium and surrounding matrix and mesenchyme. The sequence is that of Angiopoietin-1 (Angpt1) from Mus musculus (Mouse).